Here is a 144-residue protein sequence, read N- to C-terminus: 3-hydroxyacyl-[acyl-carrier-protein] dehydratase FabZ (144 aa).

His51 is an active-site residue.

It belongs to the thioester dehydratase family. FabZ subfamily.

It localises to the cytoplasm. The enzyme catalyses a (3R)-hydroxyacyl-[ACP] = a (2E)-enoyl-[ACP] + H2O. In terms of biological role, involved in unsaturated fatty acids biosynthesis. Catalyzes the dehydration of short chain beta-hydroxyacyl-ACPs and long chain saturated and unsaturated beta-hydroxyacyl-ACPs. This chain is 3-hydroxyacyl-[acyl-carrier-protein] dehydratase FabZ, found in Clostridium botulinum (strain 657 / Type Ba4).